The sequence spans 417 residues: E3 ubiquitin-protein ligase RNF135 (417 aa).

Residues 21-67 form an RING-type zinc finger; that stretch reads CIICQGLLDQPTTLPCGHSFCLRCLHDLWVSKRGAVDGCPWACPICR. Disordered stretches follow at residues 95-118 and 143-173; these read EVEA…TVQK and TQRP…SLDS. 2 coiled-coil regions span residues 121 to 145 and 180 to 204; these read TNVI…QTQR and SISQ…QGSV. Polar residues predominate over residues 143-164; the sequence is TQRPNLGSGQDNAQGTPPTDSS. The B30.2/SPRY domain occupies 225–417; that stretch reads PDQRRPAPRK…NYLEIKQLNT (193 aa).

In terms of assembly, homodimer. Interacts (homodimer) with RIGI (double-stranded RNA-bound oligomeric form); involved in both RIGI ubiquitination, oligomerization into filaments associated with viral RNAs and the bridging of these filaments. Interacts with UBE2D3 and UBE2N; E2 ubiquitin ligases involved in RNF135-mediated ubiquitination of RIGI and activation of the RIG-I signaling pathway. Interacts with PCBP2. In terms of tissue distribution, ubiquitously expressed.

Its subcellular location is the cytoplasm. The protein localises to the stress granule. It carries out the reaction S-ubiquitinyl-[E2 ubiquitin-conjugating enzyme]-L-cysteine + [acceptor protein]-L-lysine = [E2 ubiquitin-conjugating enzyme]-L-cysteine + N(6)-ubiquitinyl-[acceptor protein]-L-lysine.. It participates in protein modification; protein ubiquitination. In terms of biological role, E2-dependent E3 ubiquitin-protein ligase that functions as a RIGI coreceptor in the sensing of viral RNAs in cell cytoplasm and the activation of the antiviral innate immune response. Together with the UBE2D3, UBE2N and UB2V1 E2 ligases, catalyzes the 'Lys-63'-linked polyubiquitination of RIGI oligomerized on viral RNAs, an essential step in the activation of the RIG-I signaling pathway. Through a ubiquitin-independent parallel mechanism, which consists in bridging RIGI filaments forming on longer viral RNAs, further activates the RIG-I signaling pathway. This second mechanism that synergizes with the ubiquitin-dependent one would thereby allow an RNA length-dependent regulation of the RIG-I signaling pathway. Associated with the E2 ligase UBE2N, also constitutively synthesizes unanchored 'Lys-63'-linked polyubiquitin chains that may also activate the RIG-I signaling pathway. It is not involved in the innate immune response against DNA viruses. The sequence is that of E3 ubiquitin-protein ligase RNF135 from Mus musculus (Mouse).